The sequence spans 31 residues: Photosystem II reaction center protein T (31 aa).

An N-formylmethionine modification is found at M1. Residues 3-23 (SVAYILVLTMALAVLFFAIAF) form a helical membrane-spanning segment.

This sequence belongs to the PsbT family. PSII is composed of 1 copy each of membrane proteins PsbA, PsbB, PsbC, PsbD, PsbE, PsbF, PsbH, PsbI, PsbJ, PsbK, PsbL, PsbM, PsbT, PsbX, PsbY, PsbZ, Psb30/Ycf12, peripheral proteins PsbO, CyanoQ (PsbQ), PsbU, PsbV and a large number of cofactors. It forms dimeric complexes.

The protein localises to the cellular thylakoid membrane. Its function is as follows. Found at the monomer-monomer interface of the photosystem II (PS II) dimer, plays a role in assembly and dimerization of PSII. PSII is a light-driven water plastoquinone oxidoreductase, using light energy to abstract electrons from H(2)O, generating a proton gradient subsequently used for ATP formation. The polypeptide is Photosystem II reaction center protein T (Synechocystis sp. (strain ATCC 27184 / PCC 6803 / Kazusa)).